Reading from the N-terminus, the 449-residue chain is Methionine aminopeptidase 2 (449 aa).

Residues 1-91 (MAAQAAPELA…PRIPLTTLFP (91 aa)) are disordered. The span at 34 to 50 (EEAENEGDSDDDRDDEQ) shows a compositional bias: acidic residues. The segment covering 61–75 (KKKKKKRPKKKKKTA) has biased composition (basic residues). Histidine 199 provides a ligand contact to substrate. Residues aspartate 219, aspartate 230, and histidine 299 each coordinate a divalent metal cation. Residue histidine 307 coordinates substrate. The a divalent metal cation site is built by glutamate 335 and glutamate 430.

This sequence belongs to the peptidase M24A family. Methionine aminopeptidase eukaryotic type 2 subfamily. Co(2+) is required as a cofactor. It depends on Zn(2+) as a cofactor. Mn(2+) serves as cofactor. The cofactor is Fe(2+).

Its subcellular location is the cytoplasm. The catalysed reaction is Release of N-terminal amino acids, preferentially methionine, from peptides and arylamides.. Functionally, cotranslationally removes the N-terminal methionine from nascent proteins. The N-terminal methionine is often cleaved when the second residue in the primary sequence is small and uncharged (Met-Ala-, Cys, Gly, Pro, Ser, Thr, or Val). The protein is Methionine aminopeptidase 2 of Arthroderma benhamiae (strain ATCC MYA-4681 / CBS 112371) (Trichophyton mentagrophytes).